The sequence spans 411 residues: MSGINKIVLAYSGGLDTSAIIPWLKEHYDAEIIAFVADVGQERDDLEGIEQKAIASGAVKCIVKDLREEFVKEYVYPTLKTGAVYEGTYLLGTSMARPIIAKAMVEAALAEGADAISHGCTGKGNDQVRFEGAVAALAPQLKVIAPWRLWDMRSREDLLAYLEARDIPCKATLKKIYSRDANAWHISTEGGELESTWNEPSEAVWQWTVSAEQAPNEPEYVKLTVAKGEVVAVDDQPLSPHQILTTLNERAGKHGVGRIDITENRMVGMKSRGCYETPGGTVMVAALRAVEELVLDRPTRAWREKLGAEFSHLVYDGRWFTPLCKAIVASANAIAEDLDGEVILKMYKGQVTAVQKKSPNSLYSEDFATFGADEVYDQSHAEGFIRLYTLASRIRAMKEQHQAIGGDHTHG.

ATP contacts are provided by residues 10-18 and alanine 37; that span reads AYSGGLDTS. The L-citrulline site is built by tyrosine 89 and serine 94. Glycine 119 is a binding site for ATP. L-aspartate-binding residues include threonine 121, asparagine 125, and aspartate 126. An L-citrulline-binding site is contributed by asparagine 125. L-citrulline contacts are provided by arginine 129, serine 178, serine 187, glutamate 263, and tyrosine 275.

This sequence belongs to the argininosuccinate synthase family. Type 1 subfamily. Homotetramer.

It localises to the cytoplasm. The catalysed reaction is L-citrulline + L-aspartate + ATP = 2-(N(omega)-L-arginino)succinate + AMP + diphosphate + H(+). It participates in amino-acid biosynthesis; L-arginine biosynthesis; L-arginine from L-ornithine and carbamoyl phosphate: step 2/3. The polypeptide is Argininosuccinate synthase (Aeromonas salmonicida (strain A449)).